A 290-amino-acid polypeptide reads, in one-letter code: Porphobilinogen deaminase (290 aa).

Cys-238 is modified (S-(dipyrrolylmethanemethyl)cysteine).

The protein belongs to the HMBS family. In terms of assembly, monomer. Dipyrromethane serves as cofactor.

The enzyme catalyses 4 porphobilinogen + H2O = hydroxymethylbilane + 4 NH4(+). It participates in porphyrin-containing compound metabolism; protoporphyrin-IX biosynthesis; coproporphyrinogen-III from 5-aminolevulinate: step 2/4. Functionally, tetrapolymerization of the monopyrrole PBG into the hydroxymethylbilane pre-uroporphyrinogen in several discrete steps. This chain is Porphobilinogen deaminase, found in Clostridium botulinum (strain Eklund 17B / Type B).